The chain runs to 398 residues: 8-amino-7-oxononanoate synthase (398 aa).

R26 is a substrate binding site. Position 113–114 (113–114) interacts with pyridoxal 5'-phosphate; it reads GF. H138 is a binding site for substrate. The pyridoxal 5'-phosphate site is built by S181, H209, and T238. Residue K241 is modified to N6-(pyridoxal phosphate)lysine. Position 355 (T355) interacts with substrate.

It belongs to the class-II pyridoxal-phosphate-dependent aminotransferase family. BioF subfamily. As to quaternary structure, homodimer. It depends on pyridoxal 5'-phosphate as a cofactor.

The catalysed reaction is 6-carboxyhexanoyl-[ACP] + L-alanine + H(+) = (8S)-8-amino-7-oxononanoate + holo-[ACP] + CO2. It functions in the pathway cofactor biosynthesis; biotin biosynthesis. Catalyzes the decarboxylative condensation of pimeloyl-[acyl-carrier protein] and L-alanine to produce 8-amino-7-oxononanoate (AON), [acyl-carrier protein], and carbon dioxide. The sequence is that of 8-amino-7-oxononanoate synthase from Aeromonas salmonicida (strain A449).